The sequence spans 318 residues: 4-hydroxy-3-methylbut-2-enyl diphosphate reductase (318 aa).

[4Fe-4S] cluster is bound at residue Cys12. (2E)-4-hydroxy-3-methylbut-2-enyl diphosphate is bound by residues His41 and His74. Dimethylallyl diphosphate contacts are provided by His41 and His74. His41 and His74 together coordinate isopentenyl diphosphate. Cys96 lines the [4Fe-4S] cluster pocket. Position 124 (His124) interacts with (2E)-4-hydroxy-3-methylbut-2-enyl diphosphate. His124 is a binding site for dimethylallyl diphosphate. Position 124 (His124) interacts with isopentenyl diphosphate. Glu126 functions as the Proton donor in the catalytic mechanism. Thr167 contributes to the (2E)-4-hydroxy-3-methylbut-2-enyl diphosphate binding site. [4Fe-4S] cluster is bound at residue Cys197. (2E)-4-hydroxy-3-methylbut-2-enyl diphosphate-binding residues include Ser225, Ser226, Asn227, and Ser269. The dimethylallyl diphosphate site is built by Ser225, Ser226, Asn227, and Ser269. Isopentenyl diphosphate-binding residues include Ser225, Ser226, Asn227, and Ser269.

The protein belongs to the IspH family. [4Fe-4S] cluster serves as cofactor.

The catalysed reaction is isopentenyl diphosphate + 2 oxidized [2Fe-2S]-[ferredoxin] + H2O = (2E)-4-hydroxy-3-methylbut-2-enyl diphosphate + 2 reduced [2Fe-2S]-[ferredoxin] + 2 H(+). It catalyses the reaction dimethylallyl diphosphate + 2 oxidized [2Fe-2S]-[ferredoxin] + H2O = (2E)-4-hydroxy-3-methylbut-2-enyl diphosphate + 2 reduced [2Fe-2S]-[ferredoxin] + 2 H(+). Its pathway is isoprenoid biosynthesis; dimethylallyl diphosphate biosynthesis; dimethylallyl diphosphate from (2E)-4-hydroxy-3-methylbutenyl diphosphate: step 1/1. It functions in the pathway isoprenoid biosynthesis; isopentenyl diphosphate biosynthesis via DXP pathway; isopentenyl diphosphate from 1-deoxy-D-xylulose 5-phosphate: step 6/6. Catalyzes the conversion of 1-hydroxy-2-methyl-2-(E)-butenyl 4-diphosphate (HMBPP) into a mixture of isopentenyl diphosphate (IPP) and dimethylallyl diphosphate (DMAPP). Acts in the terminal step of the DOXP/MEP pathway for isoprenoid precursor biosynthesis. This chain is 4-hydroxy-3-methylbut-2-enyl diphosphate reductase, found in Francisella tularensis subsp. holarctica (strain LVS).